Consider the following 205-residue polypeptide: Beta-crystallin B2 (205 aa).

Ala2 carries the N-acetylalanine modification. The tract at residues 2 to 16 (ASDHQTQAGKPQPLN) is N-terminal arm. Beta/gamma crystallin 'Greek key' domains are found at residues 17–56 (PKII…LVQA) and 57–101 (GPWV…RPIK). The segment at 102–106 (VDSQE) is connecting peptide. Beta/gamma crystallin 'Greek key' domains lie at 107-148 (HKII…RVQS) and 149-191 (GTWV…RRIR). The segment at 193-205 (MQWHQRGAFHPSS) is C-terminal arm.

It belongs to the beta/gamma-crystallin family. In terms of assembly, homo/heterodimer, or complexes of higher-order. The structure of beta-crystallin oligomers seems to be stabilized through interactions between the N-terminal arms.

Crystallins are the dominant structural components of the vertebrate eye lens. The polypeptide is Beta-crystallin B2 (CRYBB2) (Mesocricetus auratus (Golden hamster)).